Here is a 457-residue protein sequence, read N- to C-terminus: Gamma-aminobutyric acid receptor subunit gamma-4 (457 aa).

The first 21 residues, 1 to 21, serve as a signal peptide directing secretion; that stretch reads MPAMVLLLCLALGPALRSARC. Residues 22 to 256 lie on the Extracellular side of the membrane; the sequence is ESTEEYDYDY…VSFDLSRRMG (235 aa). Asparagine 35 and asparagine 112 each carry an N-linked (GlcNAc...) asparagine glycan. The cysteines at positions 173 and 187 are disulfide-linked. The N-linked (GlcNAc...) asparagine glycan is linked to asparagine 230. 3 helical membrane-spanning segments follow: residues 257 to 279, 283 to 305, and 317 to 339; these read YFAI…SFWI, STPA…STIS, and AMDL…YATL. The Cytoplasmic segment spans residues 340 to 433; it reads NYLVGNKKPL…VRIHISRLDS (94 aa). Residues 434–457 traverse the membrane as a helical segment; sequence YSRVFFPTAFLLFNIVYWIAYLYL.

It belongs to the ligand-gated ion channel (TC 1.A.9) family. Gamma-aminobutyric acid receptor (TC 1.A.9.5) subfamily. GABRG4 sub-subfamily. Generally pentameric. There are five types of GABA(A) receptor chains: alpha, beta, gamma, delta, and rho. In terms of tissue distribution, abundant in several brain regions, including the ectostriatum, nucleus rotundus and hyperstriatum ventrale.

Its subcellular location is the postsynaptic cell membrane. The protein resides in the cell membrane. GABA, the major inhibitory neurotransmitter in the vertebrate brain, mediates neuronal inhibition by binding to the GABA/benzodiazepine receptor and opening an integral chloride channel. This Gallus gallus (Chicken) protein is Gamma-aminobutyric acid receptor subunit gamma-4 (GABRG4).